Here is a 429-residue protein sequence, read N- to C-terminus: D-amino acid dehydrogenase 1 (429 aa).

3–17 (VLVLGSGVIGVTSAY) is a binding site for FAD.

Belongs to the DadA oxidoreductase family. Requires FAD as cofactor.

It carries out the reaction a D-alpha-amino acid + A + H2O = a 2-oxocarboxylate + AH2 + NH4(+). In terms of biological role, oxidative deamination of D-amino acids. This is D-amino acid dehydrogenase 1 (dadA1) from Ralstonia nicotianae (strain ATCC BAA-1114 / GMI1000) (Ralstonia solanacearum).